Consider the following 512-residue polypeptide: Probable DNA ligase (512 aa).

E208 provides a ligand contact to ATP. The N6-AMP-lysine intermediate role is filled by K210. ATP is bound by residues R215, R230, E259, F299, R374, and K380.

The protein belongs to the ATP-dependent DNA ligase family. Mg(2+) is required as a cofactor.

The catalysed reaction is ATP + (deoxyribonucleotide)n-3'-hydroxyl + 5'-phospho-(deoxyribonucleotide)m = (deoxyribonucleotide)n+m + AMP + diphosphate.. Its function is as follows. DNA ligase that seals nicks in double-stranded DNA during DNA replication, DNA recombination and DNA repair. The protein is Probable DNA ligase of Streptomyces coelicolor (strain ATCC BAA-471 / A3(2) / M145).